The primary structure comprises 129 residues: Small ribosomal subunit protein uS11 (129 aa).

The protein belongs to the universal ribosomal protein uS11 family. In terms of assembly, part of the 30S ribosomal subunit. Interacts with proteins S7 and S18. Binds to IF-3.

In terms of biological role, located on the platform of the 30S subunit, it bridges several disparate RNA helices of the 16S rRNA. Forms part of the Shine-Dalgarno cleft in the 70S ribosome. The protein is Small ribosomal subunit protein uS11 of Maridesulfovibrio salexigens (strain ATCC 14822 / DSM 2638 / NCIMB 8403 / VKM B-1763) (Desulfovibrio salexigens).